Reading from the N-terminus, the 608-residue chain is Aspartate--tRNA(Asp/Asn) ligase (608 aa).

Residue Glu-187 coordinates L-aspartate. The segment at 211–214 (QQFK) is aspartate. The L-aspartate site is built by Arg-233 and His-461. 233-235 (RDE) is a binding site for ATP. Glu-495 contacts ATP. Arg-502 contributes to the L-aspartate binding site. Residue 547–550 (GLDR) coordinates ATP.

The protein belongs to the class-II aminoacyl-tRNA synthetase family. Type 1 subfamily. In terms of assembly, homodimer.

The protein resides in the cytoplasm. The catalysed reaction is tRNA(Asx) + L-aspartate + ATP = L-aspartyl-tRNA(Asx) + AMP + diphosphate. Functionally, aspartyl-tRNA synthetase with relaxed tRNA specificity since it is able to aspartylate not only its cognate tRNA(Asp) but also tRNA(Asn). Reaction proceeds in two steps: L-aspartate is first activated by ATP to form Asp-AMP and then transferred to the acceptor end of tRNA(Asp/Asn). The sequence is that of Aspartate--tRNA(Asp/Asn) ligase from Prosthecochloris aestuarii (strain DSM 271 / SK 413).